Reading from the N-terminus, the 287-residue chain is Inositol diphosphatase siw14 (287 aa).

A Tyrosine-protein phosphatase domain is found at 85–256 (NFGVVYPGII…LNDLKRYISD (172 aa)). 2 positions are modified to phosphoserine: Ser-156 and Ser-159. Cys-189 functions as the Phosphocysteine intermediate in the catalytic mechanism.

This sequence belongs to the protein-tyrosine phosphatase family. Atypical dual-specificity phosphatase Siw14-like subfamily.

Its subcellular location is the cytoplasm. The protein resides in the nucleus. It catalyses the reaction 5-diphospho-1D-myo-inositol 1,2,3,4,6-pentakisphosphate + H2O = 1D-myo-inositol hexakisphosphate + phosphate + H(+). The enzyme catalyses 1-diphospho-1D-myo-inositol 2,3,4,5,6-pentakisphosphate + H2O = 1D-myo-inositol hexakisphosphate + phosphate + H(+). The catalysed reaction is 1,5-bis(diphospho)-1D-myo-inositol 2,3,4,6-tetrakisphosphate + H2O = 1-diphospho-1D-myo-inositol 2,3,4,5,6-pentakisphosphate + phosphate + 2 H(+). Its activity is regulated as follows. Activity is inhibited by the reaction product inorganic phosphate and by sulfate (a phosphate mimetic). Not inhibited by magnesium. Functionally, cleaves the beta-phosphate at the 1- and 5-position of soluble inositol pyrophosphates. Has exopolyphosphatase activity in vitro but does not appear to contribute to the homeostasis of cellular polyphosphate. In Schizosaccharomyces pombe (strain 972 / ATCC 24843) (Fission yeast), this protein is Inositol diphosphatase siw14.